Here is a 162-residue protein sequence, read N- to C-terminus: Transcription elongation factor GreB (162 aa).

Residues Lys-52–Lys-73 are a coiled coil.

Belongs to the GreA/GreB family. GreB subfamily.

Its function is as follows. Necessary for efficient RNA polymerase transcription elongation past template-encoded arresting sites. The arresting sites in DNA have the property of trapping a certain fraction of elongating RNA polymerases that pass through, resulting in locked ternary complexes. Cleavage of the nascent transcript by cleavage factors such as GreA or GreB allows the resumption of elongation from the new 3'terminus. GreB releases sequences of up to 9 nucleotides in length. The polypeptide is Transcription elongation factor GreB (Pseudomonas putida (strain ATCC 47054 / DSM 6125 / CFBP 8728 / NCIMB 11950 / KT2440)).